Consider the following 484-residue polypeptide: UDP-N-acetylmuramoyl-L-alanyl-D-glutamate--L-lysine ligase (484 aa).

S43 serves as a coordination point for UDP-N-acetyl-alpha-D-muramoyl-L-alanyl-D-glutamate. 119–125 (GTKGKTT) is an ATP binding site. UDP-N-acetyl-alpha-D-muramoyl-L-alanyl-D-glutamate is bound by residues 161–162 (TT), S188, and R196. Residue K230 is modified to N6-carboxylysine. The L-lysine recognition motif motif lies at 405–408 (DDPN).

This sequence belongs to the MurCDEF family. MurE subfamily. Post-translationally, carboxylation is probably crucial for Mg(2+) binding and, consequently, for the gamma-phosphate positioning of ATP.

Its subcellular location is the cytoplasm. The catalysed reaction is UDP-N-acetyl-alpha-D-muramoyl-L-alanyl-D-glutamate + L-lysine + ATP = UDP-N-acetyl-alpha-D-muramoyl-L-alanyl-gamma-D-glutamyl-L-lysine + ADP + phosphate + H(+). The protein operates within cell wall biogenesis; peptidoglycan biosynthesis. Functionally, catalyzes the addition of L-lysine to the nucleotide precursor UDP-N-acetylmuramoyl-L-alanyl-D-glutamate (UMAG) in the biosynthesis of bacterial cell-wall peptidoglycan. The protein is UDP-N-acetylmuramoyl-L-alanyl-D-glutamate--L-lysine ligase of Streptococcus agalactiae serotype V (strain ATCC BAA-611 / 2603 V/R).